A 1169-amino-acid polypeptide reads, in one-letter code: RecBCD enzyme subunit RecB (1169 aa).

In terms of domain architecture, UvrD-like helicase ATP-binding spans 1–436 (MNKILEKIQN…IVLKINHRSS (436 aa)). The interval 1–839 (MNKILEKIQN…LLEIAKIFTI (839 aa)) is DNA-binding and helicase activity, interacts with RecC. 18–25 (ASAGTGKT) is an ATP binding site. One can recognise a UvrD-like helicase C-terminal domain in the interval 459 to 746 (IEKIDFTNSL…ELMTIHKSKG (288 aa)). The tract at residues 883–1169 (KEYTSSFSSL…ILELGIKRHL (287 aa)) is nuclease activity, interacts with RecD and RecA. Mg(2+)-binding residues include His939, Asp1052, and Asp1065. Asp1065 (for nuclease activity) is an active-site residue.

The protein belongs to the helicase family. UvrD subfamily. Heterotrimer of RecB, RecC and RecD. All subunits contribute to DNA-binding. Interacts with RecA. Mg(2+) is required as a cofactor.

It catalyses the reaction Exonucleolytic cleavage (in the presence of ATP) in either 5'- to 3'- or 3'- to 5'-direction to yield 5'-phosphooligonucleotides.. The catalysed reaction is Couples ATP hydrolysis with the unwinding of duplex DNA by translocating in the 3'-5' direction.. It carries out the reaction ATP + H2O = ADP + phosphate + H(+). Functionally, a helicase/nuclease that prepares dsDNA breaks (DSB) for recombinational DNA repair. Binds to DSBs and unwinds DNA via a highly rapid and processive ATP-dependent bidirectional helicase activity. Unwinds dsDNA until it encounters a Chi (crossover hotspot instigator) sequence from the 3' direction. Cuts ssDNA a few nucleotides 3' to the Chi site. The properties and activities of the enzyme are changed at Chi. The Chi-altered holoenzyme produces a long 3'-ssDNA overhang and facilitates RecA-binding to the ssDNA for homologous DNA recombination and repair. Holoenzyme degrades any linearized DNA that is unable to undergo homologous recombination. In the holoenzyme this subunit contributes ATPase, 3'-5' helicase, exonuclease activity and loads RecA onto ssDNA. The protein is RecBCD enzyme subunit RecB of Borreliella burgdorferi (strain ATCC 35210 / DSM 4680 / CIP 102532 / B31) (Borrelia burgdorferi).